Here is a 601-residue protein sequence, read N- to C-terminus: Elongation factor 4 (601 aa).

A tr-type G domain is found at 7-189; that stretch reads KHTRNFSIVA…AIVEKVPVPD (183 aa). Residues 19–24 and 136–139 each bind GTP; these read DHGKST and NKID.

Belongs to the TRAFAC class translation factor GTPase superfamily. Classic translation factor GTPase family. LepA subfamily.

It is found in the cell membrane. It carries out the reaction GTP + H2O = GDP + phosphate + H(+). Its function is as follows. Required for accurate and efficient protein synthesis under certain stress conditions. May act as a fidelity factor of the translation reaction, by catalyzing a one-codon backward translocation of tRNAs on improperly translocated ribosomes. Back-translocation proceeds from a post-translocation (POST) complex to a pre-translocation (PRE) complex, thus giving elongation factor G a second chance to translocate the tRNAs correctly. Binds to ribosomes in a GTP-dependent manner. This is Elongation factor 4 from Clostridium novyi (strain NT).